The primary structure comprises 620 residues: 1-deoxy-D-xylulose-5-phosphate synthase (620 aa).

Thiamine diphosphate-binding positions include His80 and 121-123 (GHS). Asp152 provides a ligand contact to Mg(2+). Thiamine diphosphate-binding positions include 153–154 (GA), Asn181, Tyr288, and Glu370. Asn181 is a binding site for Mg(2+).

This sequence belongs to the transketolase family. DXPS subfamily. In terms of assembly, homodimer. Mg(2+) serves as cofactor. It depends on thiamine diphosphate as a cofactor.

The enzyme catalyses D-glyceraldehyde 3-phosphate + pyruvate + H(+) = 1-deoxy-D-xylulose 5-phosphate + CO2. The protein operates within metabolic intermediate biosynthesis; 1-deoxy-D-xylulose 5-phosphate biosynthesis; 1-deoxy-D-xylulose 5-phosphate from D-glyceraldehyde 3-phosphate and pyruvate: step 1/1. In terms of biological role, catalyzes the acyloin condensation reaction between C atoms 2 and 3 of pyruvate and glyceraldehyde 3-phosphate to yield 1-deoxy-D-xylulose-5-phosphate (DXP). This chain is 1-deoxy-D-xylulose-5-phosphate synthase, found in Escherichia coli (strain SMS-3-5 / SECEC).